A 261-amino-acid polypeptide reads, in one-letter code: Probable septum site-determining protein MinC (261 aa).

The segment at 106-145 (RAPAAKPADEAEPAAVPAVETAAAPAAAAAPEQPSEPAPT) is disordered. Residues 118–144 (PAAVPAVETAAAPAAAAAPEQPSEPAP) are compositionally biased toward low complexity.

The protein belongs to the MinC family. Interacts with MinD and FtsZ.

In terms of biological role, cell division inhibitor that blocks the formation of polar Z ring septums. Rapidly oscillates between the poles of the cell to destabilize FtsZ filaments that have formed before they mature into polar Z rings. Prevents FtsZ polymerization. In Burkholderia orbicola (strain AU 1054), this protein is Probable septum site-determining protein MinC.